Consider the following 220-residue polypeptide: Small ribosomal subunit protein uS2 (220 aa).

It belongs to the universal ribosomal protein uS2 family.

This is Small ribosomal subunit protein uS2 from Methanococcus maripaludis (strain DSM 14266 / JCM 13030 / NBRC 101832 / S2 / LL).